The sequence spans 254 residues: Glucosamine-6-phosphate deaminase (254 aa).

The active-site Proton acceptor; for enolization step is the Asp-63. The active-site For ring-opening step is the Asn-129. His-131 functions as the Proton acceptor; for ring-opening step in the catalytic mechanism. Glu-136 acts as the For ring-opening step in catalysis.

This sequence belongs to the glucosamine/galactosamine-6-phosphate isomerase family. NagB subfamily.

The enzyme catalyses alpha-D-glucosamine 6-phosphate + H2O = beta-D-fructose 6-phosphate + NH4(+). Its pathway is amino-sugar metabolism; N-acetylneuraminate degradation; D-fructose 6-phosphate from N-acetylneuraminate: step 5/5. In terms of biological role, catalyzes the reversible isomerization-deamination of glucosamine 6-phosphate (GlcN6P) to form fructose 6-phosphate (Fru6P) and ammonium ion. This chain is Glucosamine-6-phosphate deaminase, found in Exiguobacterium sp. (strain ATCC BAA-1283 / AT1b).